The primary structure comprises 217 residues: tRNA (guanine-N(7)-)-methyltransferase (217 aa).

Positions 44, 69, 96, and 118 each coordinate S-adenosyl-L-methionine. D118 is an active-site residue. Substrate contacts are provided by residues K122, D154, and 191 to 194; that span reads TEYE.

Belongs to the class I-like SAM-binding methyltransferase superfamily. TrmB family.

It catalyses the reaction guanosine(46) in tRNA + S-adenosyl-L-methionine = N(7)-methylguanosine(46) in tRNA + S-adenosyl-L-homocysteine. Its pathway is tRNA modification; N(7)-methylguanine-tRNA biosynthesis. In terms of biological role, catalyzes the formation of N(7)-methylguanine at position 46 (m7G46) in tRNA. The chain is tRNA (guanine-N(7)-)-methyltransferase from Bacillus thuringiensis (strain Al Hakam).